Here is a 439-residue protein sequence, read N- to C-terminus: IAA-amino acid hydrolase ILR1-like 2 (439 aa).

The first 21 residues, 1–21 (MALNKLLSLTFQLLLFLLSVS), serve as a signal peptide directing secretion. The Mn(2+) site is built by cysteine 137, histidine 139, glutamate 173, histidine 197, and histidine 397. A Prevents secretion from ER motif is present at residues 436 to 439 (HEEL).

Belongs to the peptidase M20 family. Monomer. It depends on Mn(2+) as a cofactor. In terms of tissue distribution, expressed in leaves, stems, siliques, seeds and flowers. Detected in the distal tips of cotyledons and seedling leaves, hydathodes of leaves from mature plants, pollen, ovules and developing seeds.

Its subcellular location is the endoplasmic reticulum lumen. Hydrolyzes certain amino acid conjugates of the plant growth regulator indole-3-acetic acid (IAA), including IAA-Ala, IAA-Leu, IAA-Met, IAA-Phe, IAA-Ser, IAA-Thr, IAA-Tyr and IAA-Val. Is the most efficient enzyme of the ILL family for IAA-Ala. Not important for IAA-Leu hydrolysis in roots. May act with ILR1 to provide free IAA to germinating seedlings. This chain is IAA-amino acid hydrolase ILR1-like 2, found in Arabidopsis thaliana (Mouse-ear cress).